Reading from the N-terminus, the 467-residue chain is Probable tryptophanase (467 aa).

Residue lysine 263 is modified to N6-(pyridoxal phosphate)lysine.

The protein belongs to the beta-eliminating lyase family. The cofactor is pyridoxal 5'-phosphate.

The enzyme catalyses L-tryptophan + H2O = indole + pyruvate + NH4(+). It participates in amino-acid degradation; L-tryptophan degradation via pyruvate pathway; indole and pyruvate from L-tryptophan: step 1/1. This chain is Probable tryptophanase (tnaA), found in Aeropyrum pernix (strain ATCC 700893 / DSM 11879 / JCM 9820 / NBRC 100138 / K1).